The chain runs to 237 residues: GrpE protein homolog, mitochondrial (237 aa).

It belongs to the GrpE family. Probable component of the PAM complex at least composed of a mitochondrial HSP70 protein, GrpE, tim-44, tim-16 and tim-14/dnj-21.

It localises to the mitochondrion matrix. Essential component of the PAM complex, a complex required for the translocation of transit peptide-containing proteins from the inner membrane into the mitochondrial matrix in an ATP-dependent manner. Seems to control the nucleotide-dependent binding of mitochondrial HSP70 to substrate proteins. This chain is GrpE protein homolog, mitochondrial, found in Caenorhabditis elegans.